The sequence spans 233 residues: Synaptogyrin-4 (233 aa).

In terms of domain architecture, MARVEL spans 18-169 (FLRRPKSISR…QAYLAFQDLR (152 aa)). The next 4 helical transmembrane spans lie at 25–45 (ISRI…LTDG), 66–86 (CSFA…FLAI), 104–124 (LLDF…FCFL), and 145–165 (AAIA…YLAF). Positions 191–233 (SPSSTSPSNPPITGPNSLSYTSSALSPYMTTPKAPRLAMMPDS) are disordered. The segment covering 204–219 (GPNSLSYTSSALSPYM) has biased composition (polar residues).

It belongs to the synaptogyrin family.

The protein localises to the membrane. This is Synaptogyrin-4 (Syngr4) from Mus musculus (Mouse).